The following is a 394-amino-acid chain: Acryloyl-CoA reductase (NADH) (394 aa).

Residues 135-144 (FALTEPNAGS) and 170-172 (FIS) each bind FAD. S144 contributes to the substrate binding site. Residue 254–257 (DGAR) participates in substrate binding. Residues R282, Q293, and 350–354 (QIHGG) each bind FAD. E377 serves as the catalytic Proton acceptor. Position 378 (G378) interacts with substrate. 379–381 (TSE) contacts FAD.

Heterohexadecamer; tetramer of tetramers. Each tetramer is composed of 2 alpha (AcrC), a beta (AcrA) and a gamma (AcrB) subunit. Requires FAD as cofactor.

It localises to the cytoplasm. It carries out the reaction propanoyl-CoA + NAD(+) = acryloyl-CoA + NADH + H(+). Probable catalytic subunit of the acryloyl-CoA reductase complex involved in the pathway of L-alanine fermentation. Catalyzes the irreversible NADH-dependent formation of propionyl-CoA from acryloyl-CoA. It can also use 3-buten-2-one as substrate. This chain is Acryloyl-CoA reductase (NADH) (acrC), found in Anaerotignum propionicum (Clostridium propionicum).